A 510-amino-acid polypeptide reads, in one-letter code: NAD(P)H-quinone oxidoreductase subunit 2 A, chloroplastic (510 aa).

13 helical membrane passes run 24–44 (LLLF…GLIL), 57–77 (IPWL…ALLF), 99–119 (IFQF…VEYI), 124–144 (MAIT…MFLC), 149–169 (LITI…LSGY), 183–203 (YLLM…WLYG), 229–249 (ISIA…PAPF), 295–315 (WHLL…LIAI), 323–343 (MLAY…IVGD), 354–374 (YMLF…LFGL), 395–415 (ALSS…AGFF), 418–438 (LYLF…IGLL), and 484–504 (MILC…IIAI).

The protein belongs to the complex I subunit 2 family. As to quaternary structure, NDH is composed of at least 16 different subunits, 5 of which are encoded in the nucleus.

Its subcellular location is the plastid. It is found in the chloroplast thylakoid membrane. The enzyme catalyses a plastoquinone + NADH + (n+1) H(+)(in) = a plastoquinol + NAD(+) + n H(+)(out). It carries out the reaction a plastoquinone + NADPH + (n+1) H(+)(in) = a plastoquinol + NADP(+) + n H(+)(out). Functionally, NDH shuttles electrons from NAD(P)H:plastoquinone, via FMN and iron-sulfur (Fe-S) centers, to quinones in the photosynthetic chain and possibly in a chloroplast respiratory chain. The immediate electron acceptor for the enzyme in this species is believed to be plastoquinone. Couples the redox reaction to proton translocation, and thus conserves the redox energy in a proton gradient. In Piper cenocladum (Ant piper), this protein is NAD(P)H-quinone oxidoreductase subunit 2 A, chloroplastic.